Consider the following 451-residue polypeptide: uncharacterized protein (451 aa).

The TRAM domain occupies 2–60; it reads VVKVKQKIPLKIKRMGINGEGIGFYQKTLVFVPGALKGEDIFCQITAVKRNFAEAKLLT. The [4Fe-4S] cluster site is built by Cys73, Cys79, Cys82, and Cys162. S-adenosyl-L-methionine is bound by residues Gln283, Tyr312, Asp333, and Asp381. Residue Cys408 is the Nucleophile of the active site.

It belongs to the class I-like SAM-binding methyltransferase superfamily. RNA M5U methyltransferase family.

This is an uncharacterized protein from Streptococcus pyogenes serotype M1.